Consider the following 405-residue polypeptide: Alpha-1-antiproteinase S (405 aa).

The N-terminal stretch at 1 to 24 (MPSAIPRGLLLLAGLCCLVFGIMA) is a signal peptide. Residues asparagine 57, asparagine 94, asparagine 157, and asparagine 258 are each glycosylated (N-linked (GlcNAc...) asparagine). Residues 360-379 (GATMMEFMPMSLPEDLSFNK) form an RCL region.

It belongs to the serpin family.

The protein localises to the secreted. Inhibits elastase, chymotrypsin, cathepsin G, plasmin, and trypsin. This is Alpha-1-antiproteinase S from Cavia porcellus (Guinea pig).